The following is a 219-amino-acid chain: Mediator of RNA polymerase II transcription subunit 21 (219 aa).

Positions 86 to 125 (SAEEQLHKIDSLQKKLVDIEDEKIHAIKKKDDLLKQVDDL) form a coiled coil. Residues 141 to 219 (SLAPENVQED…ISESISPGKI (79 aa)) form a disordered region. Composition is skewed to basic and acidic residues over residues 166-181 (IEQK…KIEG) and 191-204 (SDSK…FMDK). The span at 210–219 (ISESISPGKI) shows a compositional bias: polar residues.

It belongs to the Mediator complex subunit 21 family. As to quaternary structure, component of the Mediator complex.

The protein localises to the nucleus. Its function is as follows. Component of the Mediator complex, a coactivator involved in the regulated transcription of nearly all RNA polymerase II-dependent genes. Mediator functions as a bridge to convey information from gene-specific regulatory proteins to the basal RNA polymerase II transcription machinery. Mediator is recruited to promoters by direct interactions with regulatory proteins and serves as a scaffold for the assembly of a functional preinitiation complex with RNA polymerase II and the general transcription factors. This is Mediator of RNA polymerase II transcription subunit 21 (SRB7) from Candida glabrata (strain ATCC 2001 / BCRC 20586 / JCM 3761 / NBRC 0622 / NRRL Y-65 / CBS 138) (Yeast).